The following is a 264-amino-acid chain: Chanoclavine-I dehydrogenase easD (264 aa).

An N-terminal signal peptide occupies residues 1-20; that stretch reads MASVSSKIFAITGGASGIGA. Residues isoleucine 18, aspartate 66, arginine 132, tyrosine 169, lysine 173, and threonine 204 each contribute to the NADP(+) site. Catalysis depends on tyrosine 169, which acts as the Proton donor. The active-site Lowers pKa of active site Tyr is the lysine 173.

This sequence belongs to the short-chain dehydrogenases/reductases (SDR) family. Homotetramer.

The enzyme catalyses chanoclavine-I + NAD(+) = chanoclavine-I aldehyde + NADH + H(+). It participates in alkaloid biosynthesis; ergot alkaloid biosynthesis. Functionally, chanoclavine-I dehydrogenase; part of the gene cluster that mediates the biosynthesis of fungal ergot alkaloid. DmaW catalyzes the first step of ergot alkaloid biosynthesis by condensing dimethylallyl diphosphate (DMAP) and tryptophan to form 4-dimethylallyl-L-tryptophan. The second step is catalyzed by the methyltransferase easF that methylates 4-dimethylallyl-L-tryptophan in the presence of S-adenosyl-L-methionine, resulting in the formation of 4-dimethylallyl-L-abrine. The catalase easC and the FAD-dependent oxidoreductase easE then transform 4-dimethylallyl-L-abrine to chanoclavine-I which is further oxidized by easD in the presence of NAD(+), resulting in the formation of chanoclavine-I aldehyde. Chanoclavine-I aldehyde is the precursor of ergoamides and ergopeptines in Clavicipitaceae, and clavine-type alcaloids such as fumiclavine in Trichocomaceae. However, the metabolites downstream of chanoclavine-I aldehyde in Arthrodermataceae have not been identified yet. In Arthroderma otae (strain ATCC MYA-4605 / CBS 113480) (Microsporum canis), this protein is Chanoclavine-I dehydrogenase easD.